The chain runs to 292 residues: Manganese transport system membrane protein MntC (292 aa).

8 consecutive transmembrane segments (helical) span residues 20-40 (ALTAAILVGIICGVIGCFIIL), 58-78 (VVIAYMIGASFFIGAVITGVI), 96-116 (SAIGILFTAAFALGIVLITGM), 137-157 (TDLWVTLGIGLFVLLIIILFY), 168-188 (VMAQATGIPVQMIHYLLMLLL), 190-210 (LVTVAALQTVGIVLVVAMLIT), 226-246 (LCLAAMFGVISAIAGIYFSVI), and 249-269 (VASGASIVLVASTLFALAFFF).

It belongs to the ABC-3 integral membrane protein family.

It is found in the cell membrane. This protein is probably a component of a manganese permease, a binding protein-dependent, ATP-driven transport system. This Halalkalibacterium halodurans (strain ATCC BAA-125 / DSM 18197 / FERM 7344 / JCM 9153 / C-125) (Bacillus halodurans) protein is Manganese transport system membrane protein MntC (mntC).